An 801-amino-acid chain; its full sequence is Elongation factor G, mitochondrial (801 aa).

The transit peptide at 1-62 directs the protein to the mitochondrion; the sequence is MRTPTLARLP…LSKHFQQRRN (62 aa). A tr-type G domain is found at 99-386; the sequence is SRVRNIGIAA…GVIDYLPNPS (288 aa). GTP is bound by residues 108-115, 184-188, and 238-241; these read AHIDSGKT, DTPGH, and NKMD.

This sequence belongs to the TRAFAC class translation factor GTPase superfamily. Classic translation factor GTPase family. EF-G/EF-2 subfamily.

The protein resides in the mitochondrion. It participates in protein biosynthesis; polypeptide chain elongation. In terms of biological role, mitochondrial GTPase that catalyzes the GTP-dependent ribosomal translocation step during translation elongation. During this step, the ribosome changes from the pre-translocational (PRE) to the post-translocational (POST) state as the newly formed A-site-bound peptidyl-tRNA and P-site-bound deacylated tRNA move to the P and E sites, respectively. Catalyzes the coordinated movement of the two tRNA molecules, the mRNA and conformational changes in the ribosome. The chain is Elongation factor G, mitochondrial (mef1) from Aspergillus niger (strain ATCC MYA-4892 / CBS 513.88 / FGSC A1513).